Here is a 1070-residue protein sequence, read N- to C-terminus: TSC22 domain family protein 1 (1070 aa).

The tract at residues 1–98 (MHQPPESTAA…SQAQLQAQPL (98 aa)) is required for interaction with TGFBR1 and promotion of TGF-beta signaling. 5 disordered regions span residues 1 to 110 (MHQP…KKSG), 125 to 289 (ISSN…PASV), 458 to 487 (VTSE…VGSG), 604 to 637 (YSQA…STQM), and 830 to 858 (TSQV…AQTP). A compositionally biased stretch (low complexity) spans 36–45 (GSASALNAAG). The span at 58-70 (FPPPSLLQPPPPA) shows a compositional bias: pro residues. The segment covering 84–100 (SLNLLSQAQLQAQPLAP) has biased composition (low complexity). A compositionally biased stretch (acidic residues) spans 133 to 142 (EDTESYDDLD). A compositionally biased stretch (basic residues) spans 216-240 (HPHHLHHHHHIHHGHHLQHGHHHPS). Low complexity predominate over residues 241-250 (HVAVASASIP). Positions 261–271 (KLSTTGSSDSI) are enriched in polar residues. S263 is subject to Phosphoserine. Composition is skewed to low complexity over residues 272-289 (TPVA…PASV) and 465-478 (TSGS…STRS). Positions 611–622 (VQTPLPGAPPPQ) are enriched in pro residues. The segment covering 830–845 (TSQVSSAGPSGMPSAP) has biased composition (low complexity). The segment covering 849 to 858 (VPPQNIAQTP) has biased composition (polar residues). The leucine-zipper stretch occupies residues 1003-1024 (LKEQIKELIEKNSQLEQENNLL). The interval 1034–1070 (AQFQAQLQTGSPPATTQPQGTTQPPAQPASQGSGPTA) is disordered. Residues 1041–1070 (QTGSPPATTQPQGTTQPPAQPASQGSGPTA) are compositionally biased toward low complexity.

The protein belongs to the TSC-22/Dip/Bun family. In terms of assembly, forms homodimers. Forms heterodimers. Component of a complex composed of TSC22D1 (via N-terminus), TGFBR1 and TGFBR2; the interaction between TSC22D1 and TGFBR1 is inhibited by SMAD7 and promoted by TGFB1. Interacts with SMAD7; the interaction requires TGF-beta and the interaction is inhibited by TGFBR1. Interacts with TPT1/fortilin; interaction results in the destabilization of TSC22D1 protein and prevents TSC22D1-mediated apoptosis. Interacts with SMAD4 (via N-terminus). Interacts with ACVRL1/ALK1, ACVR1/ALK2, BMPR1A/ALK3, ACVR1B/ALK4, BMPR1B/ALK6, ACVR2A/ACTRII, and BMPR2. Interacts with SMAD6. Interacts with TFE3; the interaction is enhanced in the presence of TGF-beta. As to quaternary structure, forms a heterodimer with TSC22D4/THG1. Forms a heterodimer with TSC22D4/THG1. Interacts with histone H1-2. Interacts with GNL3.

The protein localises to the cytoplasm. It localises to the nucleus. It is found in the cell membrane. The protein resides in the mitochondrion. Transcriptional repressor. Acts on the C-type natriuretic peptide (CNP) promoter. Acts to promote CASP3-mediated apoptosis. Positively regulates TGF-beta signaling by interacting with SMAD7 which inhibits binding of SMAD7 to TGFBR1, preventing recruitment of SMURF ubiquitin ligases to TGFBR1 and inhibiting SMURF-mediated ubiquitination and degradation of TGFBR1. Contributes to enhancement of TGF-beta signaling by binding to and modulating the transcription activator activity of SMAD4. Promotes TGF-beta-induced transcription of COL1A2; via its interaction with TFE3 at E-boxes in the gene proximal promoter. Plays a role in the repression of hematopoietic precursor cell growth. Promotes IL2 deprivation-induced apoptosis in T-lymphocytes, via repression of TSC22D3/GILZ transcription and activation of the caspase cascade. Functionally, may act to negatively regulate TGFB3 signaling and thereby inhibit cell death in mammary gland cells. In terms of biological role, positively regulates cell death in response to TGFB3 during mammary gland involution. The sequence is that of TSC22 domain family protein 1 from Pongo abelii (Sumatran orangutan).